The chain runs to 449 residues: Monoacylglycerol lipase (449 aa).

Residue lysine 82 forms a Glycyl lysine isopeptide (Lys-Gly) (interchain with G-Cter in ubiquitin) linkage. An AB hydrolase-1 domain is found at 151-392; that stretch reads PMLIILHGLT…LLLETSTGGH (242 aa). The GXSXG signature appears at 230–234; sequence GFSLG. The active-site Nucleophile is serine 232. Catalysis depends on charge relay system residues aspartate 364 and histidine 392.

Belongs to the AB hydrolase superfamily. AB hydrolase 4 family.

It carries out the reaction Hydrolyzes glycerol monoesters of long-chain fatty acids.. The catalysed reaction is 1-hexadecanoylglycerol + H2O = glycerol + hexadecanoate + H(+). The enzyme catalyses 1-octadecanoylglycerol + H2O = octadecanoate + glycerol + H(+). It catalyses the reaction 1-(9Z-octadecenoyl)-glycerol + H2O = glycerol + (9Z)-octadecenoate + H(+). Its function is as follows. Converts monoacylglycerides (MAG) to free fatty acids and glycerol. Has a preference for palmitoyl-MAG. Does not play a significant role in ethyl ester biosynthesis. Also possesses ester hydrolase and low but persistent TAG lipase activity. The protein is Monoacylglycerol lipase of Saccharomyces cerevisiae (strain ATCC 204508 / S288c) (Baker's yeast).